The following is a 500-amino-acid chain: MLSSSSLYAAIDLGSNSFHMLVVREVSGSMQILARIKRKVRLAAGLDKNNRLSQQAMERGWQCLRIFSERLQDIPPSQIRVVATATLRIAENSDEFVGKASEILDCPVKVISGEDEARLIYQGVAHTTGGPEKRLVVDIGGASTELVTGNGAKASQLSSLSMGCVTWLEGYFNDRSLTEENFARAEAAAHETLKLIAPKLIEQGWQICVGASGTVQALQEIMIAQGMDELITLPKLQELKHKAIECGKLEELEIEGLTLERALVFPSGLAILIAIFQALNIESMILAGGALREGLVYGMLDLPIEPDIRTRTLRNIQRRFQLDVEQSQRVKQLAEHFLQQVAKPWELDSRCHELLQSACLIHEIGLSIDFHQAPSHAAYLINYLALPGYTPAQKKLLATLLKNQSGPIDLFSFNQQNALPLIQAQRLCRLLRLAIIFANRRRNDTLPALRLKVSDEALTITLPHGWLMQHPLRAESLQQEIQWQNHAQWSLVLGEQDAQT.

Belongs to the GppA/Ppx family. GppA subfamily.

It catalyses the reaction guanosine 3'-diphosphate 5'-triphosphate + H2O = guanosine 3',5'-bis(diphosphate) + phosphate + H(+). Its pathway is purine metabolism; ppGpp biosynthesis; ppGpp from GTP: step 2/2. In terms of biological role, catalyzes the conversion of pppGpp to ppGpp. Guanosine pentaphosphate (pppGpp) is a cytoplasmic signaling molecule which together with ppGpp controls the 'stringent response', an adaptive process that allows bacteria to respond to amino acid starvation, resulting in the coordinated regulation of numerous cellular activities. The polypeptide is Guanosine-5'-triphosphate,3'-diphosphate pyrophosphatase (Photorhabdus laumondii subsp. laumondii (strain DSM 15139 / CIP 105565 / TT01) (Photorhabdus luminescens subsp. laumondii)).